Reading from the N-terminus, the 221-residue chain is Ribonuclease T (221 aa).

The region spanning 21-195 is the Exonuclease domain; that stretch reads VVVDVETAGF…YDAEKTADLF (175 aa). The Mg(2+) site is built by Asp24, Glu26, His182, and Asp187. His182 acts as the Proton donor/acceptor in catalysis.

The protein belongs to the RNase T family. Homodimer. The cofactor is Mg(2+).

Its function is as follows. Trims short 3' overhangs of a variety of RNA species, leaving a one or two nucleotide 3' overhang. Responsible for the end-turnover of tRNA: specifically removes the terminal AMP residue from uncharged tRNA (tRNA-C-C-A). Also appears to be involved in tRNA biosynthesis. The sequence is that of Ribonuclease T from Marinobacter nauticus (strain ATCC 700491 / DSM 11845 / VT8) (Marinobacter aquaeolei).